Reading from the N-terminus, the 744-residue chain is Dual specificity protein kinase shkD (744 aa).

The interval 1 to 276 (MKRFFSNLFK…SGPPEILPEE (276 aa)) is disordered. Low complexity-rich tracts occupy residues 25-70 (PTTS…NSNQ), 79-107 (SPST…SFTP), and 127-200 (TSTT…QTAS). The segment covering 201-210 (VNHTSSDQSL) has biased composition (polar residues). Low complexity predominate over residues 211–236 (NAQNVTQTNNNNNNNNNNNNNNNANN). The Protein kinase domain occupies 277–534 (IDRTDFLGQG…EILFRLNEIL (258 aa)). ATP contacts are provided by residues 283–291 (LGQGSFGSV) and Lys304. Asp400 (proton acceptor) is an active-site residue. The 94-residue stretch at 641 to 734 (WFHGDIVREQ…LVPCPKFTQE (94 aa)) folds into the SH2 domain.

This sequence belongs to the protein kinase superfamily. Ser/Thr protein kinase family. SH2 domain-containing protein kinase subfamily.

It is found in the membrane. The enzyme catalyses L-seryl-[protein] + ATP = O-phospho-L-seryl-[protein] + ADP + H(+). It carries out the reaction L-threonyl-[protein] + ATP = O-phospho-L-threonyl-[protein] + ADP + H(+). Its function is as follows. Required for proper chemotaxis and phagocytosis; proper spatiotemporal control of F-actin levels in chemotaxing cells. Negative regulator of the PI3K (phosphatidylinositol 3 kinase) pathway. Predominantly phosphorylates serines and threonines and tyrosines at a lower level. In Dictyostelium discoideum (Social amoeba), this protein is Dual specificity protein kinase shkD (shkD).